Reading from the N-terminus, the 337-residue chain is tRNA N6-adenosine threonylcarbamoyltransferase (337 aa).

Residues histidine 111 and histidine 115 each coordinate Fe cation. Substrate is bound by residues 134–138 (LVSGG), aspartate 167, glycine 180, and asparagine 272. Aspartate 300 contributes to the Fe cation binding site.

It belongs to the KAE1 / TsaD family. The cofactor is Fe(2+).

The protein resides in the cytoplasm. The enzyme catalyses L-threonylcarbamoyladenylate + adenosine(37) in tRNA = N(6)-L-threonylcarbamoyladenosine(37) in tRNA + AMP + H(+). Its function is as follows. Required for the formation of a threonylcarbamoyl group on adenosine at position 37 (t(6)A37) in tRNAs that read codons beginning with adenine. Is involved in the transfer of the threonylcarbamoyl moiety of threonylcarbamoyl-AMP (TC-AMP) to the N6 group of A37, together with TsaE and TsaB. TsaD likely plays a direct catalytic role in this reaction. The protein is tRNA N6-adenosine threonylcarbamoyltransferase of Klebsiella pneumoniae (strain 342).